A 335-amino-acid polypeptide reads, in one-letter code: N-lysine methyltransferase KMT5A-A (335 aa).

2 disordered regions span residues 1 to 91 (MGRG…EVEK) and 133 to 183 (LPPE…EIES). A compositionally biased stretch (basic and acidic residues) spans 67–91 (SVTHHESKCLGKPSTETRKKAEVEK). The span at 145-161 (VKNKPLRKKTQRQKSPN) shows a compositional bias: basic residues. An SET domain is found at 199–320 (EGIKMHMITG…VGEELLYDYG (122 aa)). S-adenosyl-L-methionine is bound by residues 209-211 (KGR), Tyr-254, and 281-282 (NH).

It belongs to the class V-like SAM-binding methyltransferase superfamily. Histone-lysine methyltransferase family. PR/SET subfamily.

The protein localises to the nucleus. It is found in the chromosome. The catalysed reaction is L-lysyl(20)-[histone H4] + S-adenosyl-L-methionine = N(6)-methyl-L-lysyl(20)-[histone H4] + S-adenosyl-L-homocysteine + H(+). The enzyme catalyses L-lysyl-[protein] + S-adenosyl-L-methionine = N(6)-methyl-L-lysyl-[protein] + S-adenosyl-L-homocysteine + H(+). In terms of biological role, protein-lysine N-methyltransferase that monomethylates both histones and non-histone proteins. Specifically monomethylates 'Lys-20' of histone H4 (H4K20me1). H4K20me1 is enriched during mitosis and represents a specific tag for epigenetic transcriptional repression. Mainly functions in euchromatin regions, thereby playing a central role in the silencing of euchromatic genes. Required for cell proliferation, probably by contributing to the maintenance of proper higher-order structure of DNA during mitosis. Involved in chromosome condensation and proper cytokinesis. In Xenopus laevis (African clawed frog), this protein is N-lysine methyltransferase KMT5A-A.